A 158-amino-acid polypeptide reads, in one-letter code: Cytochrome c-type biogenesis protein CcmE (158 aa).

Residues 1–8 lie on the Cytoplasmic side of the membrane; that stretch reads MMRHRNRR. The helical; Signal-anchor for type II membrane protein transmembrane segment at 9–29 threads the bilayer; the sequence is LATIAASAIVLVVAVGLGLMA. The Periplasmic portion of the chain corresponds to 30–158; sequence LRSAVVFFYS…PSAAGDGDSR (129 aa). Heme contacts are provided by His-123 and Tyr-127. Residues 139–158 form a disordered region; that stretch reads AGVWQGEGETPSAAGDGDSR.

This sequence belongs to the CcmE/CycJ family.

It localises to the cell inner membrane. Functionally, heme chaperone required for the biogenesis of c-type cytochromes. Transiently binds heme delivered by CcmC and transfers the heme to apo-cytochromes in a process facilitated by CcmF and CcmH. The chain is Cytochrome c-type biogenesis protein CcmE from Maricaulis maris (strain MCS10) (Caulobacter maris).